The primary structure comprises 822 residues: Putative ESX-1 scaffolding and assembly protein SaeB (822 aa).

Functionally, may be involved in assembly of the ESX-1 / type VII specialized secretion system (T7SS), which exports several proteins including EsxA and EsxB. Involved in DNA conjugation in recipient (MKD8) but not donor (mc(2)155) strain. The protein is Putative ESX-1 scaffolding and assembly protein SaeB (saeB) of Mycolicibacterium smegmatis (strain MKD8) (Mycobacterium smegmatis).